The following is a 382-amino-acid chain: U11/U12 small nuclear ribonucleoprotein 59 kDa protein (382 aa).

Residues 31–63 (NTKNITDQLKQLQDTLNLAKSMEKELEALKMIK) are a coiled coil. The tract at residues 274–297 (SEENTTLTTSNKTNNDTDKDSNTN) is disordered. Over residues 277 to 287 (NTTLTTSNKTN) the composition is skewed to low complexity.

Component of the U11/U12 snRNPs that are part of the U12-type spliceosome.

The protein localises to the nucleus. The chain is U11/U12 small nuclear ribonucleoprotein 59 kDa protein (SNRNP59) from Arabidopsis thaliana (Mouse-ear cress).